Reading from the N-terminus, the 526-residue chain is Bifunctional purine biosynthesis protein PurH (526 aa).

One can recognise an MGS-like domain in the interval 1 to 149 (MLHSLPIRRA…KNHEAVTVVV (149 aa)).

It belongs to the PurH family.

It catalyses the reaction (6R)-10-formyltetrahydrofolate + 5-amino-1-(5-phospho-beta-D-ribosyl)imidazole-4-carboxamide = 5-formamido-1-(5-phospho-D-ribosyl)imidazole-4-carboxamide + (6S)-5,6,7,8-tetrahydrofolate. The enzyme catalyses IMP + H2O = 5-formamido-1-(5-phospho-D-ribosyl)imidazole-4-carboxamide. It functions in the pathway purine metabolism; IMP biosynthesis via de novo pathway; 5-formamido-1-(5-phospho-D-ribosyl)imidazole-4-carboxamide from 5-amino-1-(5-phospho-D-ribosyl)imidazole-4-carboxamide (10-formyl THF route): step 1/1. It participates in purine metabolism; IMP biosynthesis via de novo pathway; IMP from 5-formamido-1-(5-phospho-D-ribosyl)imidazole-4-carboxamide: step 1/1. The protein is Bifunctional purine biosynthesis protein PurH of Rhodospirillum rubrum (strain ATCC 11170 / ATH 1.1.1 / DSM 467 / LMG 4362 / NCIMB 8255 / S1).